The chain runs to 274 residues: Large ribosomal subunit protein uL2 (274 aa).

Residues 197–274 (NSDHALEKSG…SKYIIERRKK (78 aa)) are disordered. 2 stretches are compositionally biased toward basic residues: residues 207 to 220 (KAGR…RPHN) and 244 to 274 (PRSR…RRKK).

The protein belongs to the universal ribosomal protein uL2 family. As to quaternary structure, part of the 50S ribosomal subunit. Forms a bridge to the 30S subunit in the 70S ribosome.

Its function is as follows. One of the primary rRNA binding proteins. Required for association of the 30S and 50S subunits to form the 70S ribosome, for tRNA binding and peptide bond formation. It has been suggested to have peptidyltransferase activity; this is somewhat controversial. Makes several contacts with the 16S rRNA in the 70S ribosome. The chain is Large ribosomal subunit protein uL2 from Porphyromonas gingivalis (strain ATCC BAA-308 / W83).